The following is a 252-amino-acid chain: Small ribosomal subunit protein uS2 (252 aa).

The protein belongs to the universal ribosomal protein uS2 family. In terms of assembly, component of the small ribosomal subunit. Mature ribosomes consist of a small (40S) and a large (60S) subunit. The 40S subunit contains about 33 different proteins and 1 molecule of RNA (18S). The 60S subunit contains about 49 different proteins and 3 molecules of RNA (25S, 5.8S and 5S). Interacts with RPS21.

Its subcellular location is the cytoplasm. Required for the assembly and/or stability of the 40S ribosomal subunit. Required for the processing of the 20S rRNA-precursor to mature 18S rRNA in a late step of the maturation of 40S ribosomal subunits. The protein is Small ribosomal subunit protein uS2 of Encephalitozoon cuniculi (strain GB-M1) (Microsporidian parasite).